Here is a 240-residue protein sequence, read N- to C-terminus: uncharacterized protein (240 aa).

A disordered region spans residues 26–52 (DYVDDGESLPTRQSVKNQREQKKKQGK). A helical transmembrane segment spans residues 57–77 (LFTVLAVIFVFVPVIVLVTLF). Positions 100–185 (KYEVVPKSED…QPAEPVQNVP (86 aa)) are disordered. Basic and acidic residues predominate over residues 103–159 (VVPKSEDKNDTADTKETALQKESKKEPEDSKPKEQTAADKKQTAVAEKEDSPNKEEA). Positions 160–185 (TAAAASSSQSTVQQQEQPAEPVQNVP) are enriched in low complexity. In terms of domain architecture, LysM spans 189 to 235 (VKHTVQKKETLYRISMKYYKSRTGEEKIRAYNHLNGNDVYTGQVLDI).

The protein localises to the membrane. This is an uncharacterized protein from Bacillus subtilis (strain 168).